The chain runs to 73 residues: Translation initiation factor IF-1 (73 aa).

The S1-like domain occupies 1-73 (MANKEELIEF…TKGRITYRAR (73 aa)).

This sequence belongs to the IF-1 family. As to quaternary structure, component of the 30S ribosomal translation pre-initiation complex which assembles on the 30S ribosome in the order IF-2 and IF-3, IF-1 and N-formylmethionyl-tRNA(fMet); mRNA recruitment can occur at any time during PIC assembly.

It is found in the cytoplasm. In terms of biological role, one of the essential components for the initiation of protein synthesis. Stabilizes the binding of IF-2 and IF-3 on the 30S subunit to which N-formylmethionyl-tRNA(fMet) subsequently binds. Helps modulate mRNA selection, yielding the 30S pre-initiation complex (PIC). Upon addition of the 50S ribosomal subunit IF-1, IF-2 and IF-3 are released leaving the mature 70S translation initiation complex. The polypeptide is Translation initiation factor IF-1 (Acinetobacter baumannii (strain ATCC 17978 / DSM 105126 / CIP 53.77 / LMG 1025 / NCDC KC755 / 5377)).